The primary structure comprises 116 residues: Large ribosomal subunit protein bL20 (116 aa).

This sequence belongs to the bacterial ribosomal protein bL20 family.

Functionally, binds directly to 23S ribosomal RNA and is necessary for the in vitro assembly process of the 50S ribosomal subunit. It is not involved in the protein synthesizing functions of that subunit. The sequence is that of Large ribosomal subunit protein bL20 from Picosynechococcus sp. (strain ATCC 27264 / PCC 7002 / PR-6) (Agmenellum quadruplicatum).